Consider the following 314-residue polypeptide: Jacalin-related lectin 9 (314 aa).

Residues 1–23 (MIFIYIFLFLSSAIIDSNGFAMA) form the signal peptide. 2 Jacalin-type lectin domains span residues 24-165 (QKLE…YLTK) and 168-313 (PTKS…YFSP).

Belongs to the jacalin lectin family.

This is Jacalin-related lectin 9 (JAL9) from Arabidopsis thaliana (Mouse-ear cress).